A 342-amino-acid chain; its full sequence is S-adenosylmethionine:tRNA ribosyltransferase-isomerase (342 aa).

The protein belongs to the QueA family. Monomer.

The protein localises to the cytoplasm. The enzyme catalyses 7-aminomethyl-7-carbaguanosine(34) in tRNA + S-adenosyl-L-methionine = epoxyqueuosine(34) in tRNA + adenine + L-methionine + 2 H(+). It participates in tRNA modification; tRNA-queuosine biosynthesis. Functionally, transfers and isomerizes the ribose moiety from AdoMet to the 7-aminomethyl group of 7-deazaguanine (preQ1-tRNA) to give epoxyqueuosine (oQ-tRNA). The sequence is that of S-adenosylmethionine:tRNA ribosyltransferase-isomerase from Campylobacter jejuni subsp. jejuni serotype O:2 (strain ATCC 700819 / NCTC 11168).